Consider the following 243-residue polypeptide: UPF0502 protein RALTA_B0914 (243 aa).

Polar residues predominate over residues 1–10 (MPSTPESDPT). A disordered region spans residues 1–23 (MPSTPESDPTQPGDRPARPALRP).

This sequence belongs to the UPF0502 family.

In Cupriavidus taiwanensis (strain DSM 17343 / BCRC 17206 / CCUG 44338 / CIP 107171 / LMG 19424 / R1) (Ralstonia taiwanensis (strain LMG 19424)), this protein is UPF0502 protein RALTA_B0914.